Reading from the N-terminus, the 267-residue chain is GTP cyclohydrolase FolE2 (267 aa).

This sequence belongs to the GTP cyclohydrolase IV family.

It carries out the reaction GTP + H2O = 7,8-dihydroneopterin 3'-triphosphate + formate + H(+). It functions in the pathway cofactor biosynthesis; 7,8-dihydroneopterin triphosphate biosynthesis; 7,8-dihydroneopterin triphosphate from GTP: step 1/1. Functionally, converts GTP to 7,8-dihydroneopterin triphosphate. The chain is GTP cyclohydrolase FolE2 from Nitrosococcus oceani (strain ATCC 19707 / BCRC 17464 / JCM 30415 / NCIMB 11848 / C-107).